Consider the following 100-residue polypeptide: ATP synthase subunit c (100 aa).

A run of 2 helical transmembrane segments spans residues 27-47 (SVIA…IGMG) and 72-92 (FIAL…TLIV).

It belongs to the ATPase C chain family. In terms of assembly, F-type ATPases have 2 components, F(1) - the catalytic core - and F(0) - the membrane proton channel. F(1) has five subunits: alpha(3), beta(3), gamma(1), delta(1), epsilon(1). F(0) has three main subunits: a(1), b(2) and c(10-14). The alpha and beta chains form an alternating ring which encloses part of the gamma chain. F(1) is attached to F(0) by a central stalk formed by the gamma and epsilon chains, while a peripheral stalk is formed by the delta and b chains.

Its subcellular location is the cell inner membrane. In terms of biological role, f(1)F(0) ATP synthase produces ATP from ADP in the presence of a proton or sodium gradient. F-type ATPases consist of two structural domains, F(1) containing the extramembraneous catalytic core and F(0) containing the membrane proton channel, linked together by a central stalk and a peripheral stalk. During catalysis, ATP synthesis in the catalytic domain of F(1) is coupled via a rotary mechanism of the central stalk subunits to proton translocation. In Campylobacter curvus (strain 525.92), this protein is ATP synthase subunit c.